A 176-amino-acid chain; its full sequence is Large ribosomal subunit protein uL6 (176 aa).

Belongs to the universal ribosomal protein uL6 family. Part of the 50S ribosomal subunit.

Functionally, this protein binds to the 23S rRNA, and is important in its secondary structure. It is located near the subunit interface in the base of the L7/L12 stalk, and near the tRNA binding site of the peptidyltransferase center. This is Large ribosomal subunit protein uL6 from Methanosarcina mazei (strain ATCC BAA-159 / DSM 3647 / Goe1 / Go1 / JCM 11833 / OCM 88) (Methanosarcina frisia).